Here is a 283-residue protein sequence, read N- to C-terminus: Phosphatidylglycerol--prolipoprotein diacylglyceryl transferase (283 aa).

A run of 7 helical transmembrane segments spans residues 21–41 (LAIR…LWLA), 60–80 (LLFA…VLFY), 95–115 (VWTG…AMLW), 124–144 (FFTI…AGRL), 176–196 (SQLY…NWFI), 203–223 (GAVS…VEYV), and 239–259 (MGQI…VWAF). Residue Arg143 coordinates a 1,2-diacyl-sn-glycero-3-phospho-(1'-sn-glycerol).

It belongs to the Lgt family.

It localises to the cell inner membrane. The enzyme catalyses L-cysteinyl-[prolipoprotein] + a 1,2-diacyl-sn-glycero-3-phospho-(1'-sn-glycerol) = an S-1,2-diacyl-sn-glyceryl-L-cysteinyl-[prolipoprotein] + sn-glycerol 1-phosphate + H(+). It participates in protein modification; lipoprotein biosynthesis (diacylglyceryl transfer). Catalyzes the transfer of the diacylglyceryl group from phosphatidylglycerol to the sulfhydryl group of the N-terminal cysteine of a prolipoprotein, the first step in the formation of mature lipoproteins. The sequence is that of Phosphatidylglycerol--prolipoprotein diacylglyceryl transferase from Aliivibrio salmonicida (strain LFI1238) (Vibrio salmonicida (strain LFI1238)).